Consider the following 971-residue polypeptide: Lon protease homolog, mitochondrial (971 aa).

The transit peptide at 1-55 directs the protein to the mitochondrion; the sequence is MYRAGAVLLRGATRTRLLAAASAHQSFATFSQRNQSILMMKSMELAGNSGERRFY. One can recognise a Lon N-terminal domain in the interval 89 to 359; that stretch reads VPMLAINRYP…IALLLIQKEK (271 aa). The interval 190 to 255 is disordered; sequence TPKNETPLNG…PPSATGEKQK (66 aa). The segment covering 214-224 has biased composition (pro residues); it reads LTPPPSPPPLA. Residue 512-519 participates in ATP binding; sequence GPPGVGKT. Residues 718–749 are disordered; that stretch reads AEQQNEDEEPAEKATTAITENSEAEPITSTSS. Residues 733 to 749 show a composition bias toward polar residues; the sequence is TAITENSEAEPITSTSS. A Lon proteolytic domain is found at 784 to 971; the sequence is VTPPGVIMGL…YDELYEHLFQ (188 aa). Active-site residues include Ser878 and Lys921.

Belongs to the peptidase S16 family. Homohexamer or homoheptamer. Organized in a ring with a central cavity.

Its subcellular location is the mitochondrion matrix. It carries out the reaction Hydrolysis of proteins in presence of ATP.. Functionally, ATP-dependent serine protease that mediates the selective degradation of misfolded, unassembled or oxidatively damaged polypeptides as well as certain short-lived regulatory proteins in the mitochondrial matrix. May also have a chaperone function in the assembly of inner membrane protein complexes. Participates in the regulation of mitochondrial gene expression and in the maintenance of the integrity of the mitochondrial genome. Binds to mitochondrial DNA in a site-specific manner. Involved in the degradation of transcription factor atfs-1 in the mitochondrion. The polypeptide is Lon protease homolog, mitochondrial (Caenorhabditis elegans).